A 482-amino-acid chain; its full sequence is 2-succinylbenzoate--CoA ligase (482 aa).

This sequence belongs to the ATP-dependent AMP-binding enzyme family. MenE subfamily.

It catalyses the reaction 2-succinylbenzoate + ATP + CoA = 2-succinylbenzoyl-CoA + AMP + diphosphate. It functions in the pathway quinol/quinone metabolism; 1,4-dihydroxy-2-naphthoate biosynthesis; 1,4-dihydroxy-2-naphthoate from chorismate: step 5/7. Its pathway is quinol/quinone metabolism; menaquinone biosynthesis. In terms of biological role, converts 2-succinylbenzoate (OSB) to 2-succinylbenzoyl-CoA (OSB-CoA). The protein is 2-succinylbenzoate--CoA ligase of Bacillus cereus (strain ATCC 14579 / DSM 31 / CCUG 7414 / JCM 2152 / NBRC 15305 / NCIMB 9373 / NCTC 2599 / NRRL B-3711).